The chain runs to 349 residues: Mitogen-activated protein kinase sty1 (349 aa).

The Protein kinase domain maps to tyrosine 20–leucine 299. ATP contacts are provided by residues isoleucine 26 to valine 34 and lysine 49. Aspartate 141 (proton acceptor) is an active-site residue. Threonine 171 carries the phosphothreonine modification. The short motif at threonine 171 to tyrosine 173 is the TXY element. Tyrosine 173 bears the Phosphotyrosine mark. Serine 175 bears the Phosphoserine mark. Threonine 176 carries the phosphothreonine modification. Residues threonine 176–tyrosine 178 carry the TXY motif.

It belongs to the protein kinase superfamily. Ser/Thr protein kinase family. MAP kinase subfamily. HOG1 sub-subfamily. As to quaternary structure, interacts with cdc37, cmk2, hal4, sin1 and srk1. Mg(2+) serves as cofactor. Dually phosphorylated on Thr-171 and Tyr-173, which activates the enzyme. Phosphorylated by wis1 in response to osmotic stress, nutrient limitation, hydrogen peroxide and arsenite. Dephosphorylated by pyp1 and pyp2.

The protein localises to the cytoplasm. It localises to the nucleus. It catalyses the reaction L-seryl-[protein] + ATP = O-phospho-L-seryl-[protein] + ADP + H(+). The catalysed reaction is L-threonyl-[protein] + ATP = O-phospho-L-threonyl-[protein] + ADP + H(+). Its activity is regulated as follows. Activated by the MAPK kinase wisl, and negatively regulated by pypl and pyp2 tyrosine phosphatases. Its function is as follows. Proline-directed serine/threonine-protein kinase involved in a signal transduction pathway that is activated by changes in the osmolarity of the extracellular environment. Controls osmotic regulation of transcription of target genes. Involved in osmoregulation and stress response pathways leading to an efficient start of sexual differentiation. Supports translation initiation and facilitates adaptation to environmental stress in part through reducing eIF2-alpha phosphorylation. Links the cell-cycle G2/M control with changes in the extracellular environment that affect cell physiology. Phosphorylates atf1 and mkp1. In conjunction with hal4, has a role in the cellular resistance to toxic cations such as Na(+), Li(+) and Ca(2+). Involved in resistance to arsenite, methylglyoxal and hydrogen peroxide. Involved in induction of thermotolerance in mRNA export, as well as in vacuolar fission. The chain is Mitogen-activated protein kinase sty1 (sty1) from Schizosaccharomyces pombe (strain 972 / ATCC 24843) (Fission yeast).